A 336-amino-acid polypeptide reads, in one-letter code: Glutamyl endopeptidase (336 aa).

Residues 1–29 (MKGKFLKVSSLFVATLTTATLVSSPAANA) form the signal peptide. A propeptide spanning residues 30–68 (LSSKAMDNHPQQTQSSKQQTPKIQKGGNLKPLEQREHAN) is cleaved from the precursor. The disordered stretch occupies residues 34–61 (AMDNHPQQTQSSKQQTPKIQKGGNLKPL). Residues 39-51 (PQQTQSSKQQTPK) show a composition bias toward low complexity. Catalysis depends on charge relay system residues His-119, Asp-161, and Ser-237. The disordered stretch occupies residues 283 to 336 (FANDDQPNNPDNPDNPNNPDNPNNPDEPNNPDNPNNPDNPDNGDNNNSDNPDAA). The segment covering 286 to 336 (DDQPNNPDNPDNPNNPDNPNNPDEPNNPDNPNNPDNPDNGDNNNSDNPDAA) has biased composition (low complexity). 11 consecutive repeat copies span residues 289 to 291 (PNN), 292 to 294 (PDN), 295 to 297 (PDN), 298 to 300 (PNN), 301 to 303 (PDN), 304 to 306 (PNN), 310 to 312 (PNN), 313 to 315 (PDN), 316 to 318 (PNN), 319 to 321 (PDN), and 322 to 324 (PDN). The 11 X 3 AA repeats of P-[DN]-N stretch occupies residues 289–324 (PNNPDNPDNPNNPDNPNNPDEPNNPDNPNNPDNPDN).

The protein belongs to the peptidase S1B family. Proteolytically cleaved by aureolysin (aur). This cleavage leads to the activation of SspA.

It is found in the secreted. The enzyme catalyses Preferential cleavage: Glu-|-Xaa, Asp-|-Xaa.. Preferentially cleaves peptide bonds on the carboxyl-terminal side of aspartate and glutamate. Along with other extracellular proteases it is involved in colonization and infection of human tissues. Required for proteolytic maturation of thiol protease SspB and inactivation of SspC, an inhibitor of SspB. It is the most important protease for degradation of fibronectin-binding protein (FnBP) and surface protein A, which are involved in adherence to host cells. May also protect bacteria against host defense mechanism by cleaving the immunoglobulin classes IgG, IgA and IgM. May be involved in the stability of secreted lipases. This chain is Glutamyl endopeptidase (sspA), found in Staphylococcus aureus (strain NCTC 8325 / PS 47).